Reading from the N-terminus, the 426-residue chain is Lipoyl synthase, mitochondrial (426 aa).

A mitochondrion-targeting transit peptide spans 1–29 (MASPAPLQRLQAPLRRSLARAAVLSSRTY). Residues 27–42 (RTYATIPSPSDPGLTQ) are compositionally biased toward polar residues. Residues 27–61 (RTYATIPSPSDPGLTQSSPSPAASTTPAKKAPRPS) are disordered. A compositionally biased stretch (low complexity) spans 43-55 (SSPSPAASTTPAK). [4Fe-4S] cluster contacts are provided by cysteine 140, cysteine 145, cysteine 151, cysteine 171, cysteine 175, cysteine 178, and serine 388. The 224-residue stretch at 154–377 (GNDKSAATAT…KQRALDMGFL (224 aa)) folds into the Radical SAM core domain.

Belongs to the radical SAM superfamily. Lipoyl synthase family. The cofactor is [4Fe-4S] cluster.

It localises to the mitochondrion. The catalysed reaction is [[Fe-S] cluster scaffold protein carrying a second [4Fe-4S](2+) cluster] + N(6)-octanoyl-L-lysyl-[protein] + 2 oxidized [2Fe-2S]-[ferredoxin] + 2 S-adenosyl-L-methionine + 4 H(+) = [[Fe-S] cluster scaffold protein] + N(6)-[(R)-dihydrolipoyl]-L-lysyl-[protein] + 4 Fe(3+) + 2 hydrogen sulfide + 2 5'-deoxyadenosine + 2 L-methionine + 2 reduced [2Fe-2S]-[ferredoxin]. The protein operates within protein modification; protein lipoylation via endogenous pathway; protein N(6)-(lipoyl)lysine from octanoyl-[acyl-carrier-protein]: step 2/2. Its function is as follows. Catalyzes the radical-mediated insertion of two sulfur atoms into the C-6 and C-8 positions of the octanoyl moiety bound to the lipoyl domains of lipoate-dependent enzymes, thereby converting the octanoylated domains into lipoylated derivatives. This chain is Lipoyl synthase, mitochondrial, found in Podospora anserina (strain S / ATCC MYA-4624 / DSM 980 / FGSC 10383) (Pleurage anserina).